A 538-amino-acid chain; its full sequence is Syncytin-1 (538 aa).

An N-terminal signal peptide occupies residues 1 to 20 (MALPYHIFLFTVLLPSFTLT). The Extracellular portion of the chain corresponds to 21–443 (APPPCRCMTS…NIGPWGLFSQ (423 aa)). Asn-169 carries an N-linked (GlcNAc...) asparagine glycan. The CXXC motif lies at 186–189 (CWMC). 3 disulfides stabilise this stretch: Cys-186/Cys-189, Cys-186/Cys-405, and Cys-397/Cys-404. Asn-208, Asn-214, Asn-234, Asn-242, Asn-245, and Asn-281 each carry an N-linked (GlcNAc...) asparagine glycan. The tract at residues 320-340 (ILPFVMAAGVLGALGTGIGGI) is fusion peptide. Residues 380-396 (LQNRRALDLLTAERGGT) form an immunosuppression region. The CX6CC signature appears at 397–405 (CLFLGEECC). Residue Asn-409 is glycosylated (N-linked (GlcNAc...) asparagine). The helical transmembrane segment at 444–464 (WMPWILPFLGPLAAIILLLLF) threads the bilayer. The tract at residues 465 to 484 (GPCIFNLLVNFVSSRIEAVK) is essential for the fusiogenic function. Residues 465–538 (GPCIFNLLVN…LLRPNSAGSS (74 aa)) lie on the Cytoplasmic side of the membrane. The disordered stretch occupies residues 501-538 (PLDWPASPRSDVNDIKGTPPEEISTAQPLLRPNSAGSS).

Belongs to the gamma type-C retroviral envelope protein family. HERV class-I W env subfamily. The mature envelope protein (Env) consists of a trimer of SU-TM heterodimers attached probably by a labile interchain disulfide bond. Interacts with the C-type lectin CD209/DC-SIGN. Post-translationally, specific enzymatic cleavages in vivo yield mature proteins. Envelope glycoproteins are synthesized as an inactive precursor that is heavily N-glycosylated and processed likely by furin in the Golgi to yield the mature SU and TM proteins. The cleavage site between SU and TM requires the minimal sequence [KR]-X-[KR]-R. The CXXC motif is highly conserved across a broad range of retroviral envelope proteins. It is thought to participate in the formation of a labile disulfide bond possibly with the CX6CC motif present in the transmembrane protein.

It localises to the cell membrane. The protein resides in the virion. In terms of biological role, this endogenous retroviral envelope protein has retained its original fusogenic properties and participates in trophoblast fusion and the formation of a syncytium during placenta morphogenesis. May recognize and induce fusion through binding of SLC1A4 and SLC1A5. Functionally, endogenous envelope proteins may have kept, lost or modified their original function during evolution. Retroviral envelope proteins mediate receptor recognition and membrane fusion during early infection. The surface protein (SU) mediates receptor recognition, while the transmembrane protein (TM) acts as a class I viral fusion protein. The protein may have at least 3 conformational states: pre-fusion native state, pre-hairpin intermediate state, and post-fusion hairpin state. During viral and target cell membrane fusion, the coiled coil regions (heptad repeats) assume a trimer-of-hairpins structure, positioning the fusion peptide in close proximity to the C-terminal region of the ectodomain. The formation of this structure appears to drive apposition and subsequent fusion of membranes. This is Syncytin-1 (ERVW-1) from Pongo pygmaeus (Bornean orangutan).